The chain runs to 198 residues: Beta-crystallin A1 (198 aa).

An N-terminal arm region spans residues 1-13; it reads MLYLVLFLVPFNS. 2 Beta/gamma crystallin 'Greek key' domains span residues 14–53 and 54–100; these read IQITIYDQENFQGKRMEFTSSCPNVSERNFDNVRSLKVEC and GAWI…RPIC. 2 positions are modified to S-glutathionyl cysteine; alternate: Cys65 and Cys100. S-methylcysteine; alternate is present on residues Cys65 and Cys100. Positions 101 to 106 are connecting peptide; the sequence is SANHKE. 2 consecutive Beta/gamma crystallin 'Greek key' domains span residues 107-148 and 149-197; these read SKIT…KIQC and GAWV…RRIQ.

It belongs to the beta/gamma-crystallin family. As to quaternary structure, homo/heterodimer, or complexes of higher-order. The structure of beta-crystallin oligomers seems to be stabilized through interactions between the N-terminal arms. Interacts with CRYBA1.

Crystallins are the dominant structural components of the vertebrate eye lens. The chain is Beta-crystallin A1 from Mus musculus (Mouse).